Here is a 145-residue protein sequence, read N- to C-terminus: Histone H2B.1, sperm (145 aa).

A disordered region spans residues 1-52; that stretch reads MPSQKSPTKRSPTKRSPTKRSPQKGGKGGKGAKRGGKAGKRRRGVQVKRRRR. 4 consecutive short sequence motifs (SPKK motif) follow at residues 6–9, 11–14, 16–19, and 21–24; these read SPTK and SPQK. Composition is skewed to basic residues over residues 7–22 and 30–52; these read PTKR…KRSP and KGAK…RRRR. 2 positions are modified to phosphoserine: serine 16 and serine 21. Serine 132 is a glycosylation site (O-linked (GlcNAc) serine). Lysine 140 is covalently cross-linked (Glycyl lysine isopeptide (Lys-Gly) (interchain with G-Cter in ubiquitin)).

Belongs to the histone H2B family. The nucleosome is a histone octamer containing two molecules each of H2A, H2B, H3 and H4 assembled in one H3-H4 heterotetramer and two H2A-H2B heterodimers. The octamer wraps approximately 147 bp of DNA. Monoubiquitination of Lys-140 gives a specific tag for epigenetic transcriptional activation and is also prerequisite for histone H3 'Lys-4' and 'Lys-79' methylation. In terms of processing, phosphorylated on SPKK motifs 3 and 4; which may regulate DNA binding. Dephosphorylated during maturation of spermatids to mature sperm and rephosphorylated at fertilization. Post-translationally, glcNAcylation at Ser-132 promotes monoubiquitination of Lys-140. It fluctuates in response to extracellular glucose, and associates with transcribed genes.

The protein resides in the nucleus. It localises to the chromosome. In terms of biological role, core component of nucleosome. Nucleosomes wrap and compact DNA into chromatin, limiting DNA accessibility to the cellular machineries which require DNA as a template. Histones thereby play a central role in transcription regulation, DNA repair, DNA replication and chromosomal stability. DNA accessibility is regulated via a complex set of post-translational modifications of histones, also called histone code, and nucleosome remodeling. In Parechinus angulosus (Angulate sea urchin), this protein is Histone H2B.1, sperm.